Reading from the N-terminus, the 337-residue chain is Eukaryotic translation initiation factor 3 subunit H (337 aa).

Residues 21–153 (VQCDGLAVMK…LKAYRLTPQA (133 aa)) form the MPN domain.

Belongs to the eIF-3 subunit H family. As to quaternary structure, component of the eukaryotic translation initiation factor 3 (eIF-3) complex. The eIF-3 complex interacts with pix. Interacts with mxt.

The protein localises to the cytoplasm. Functionally, component of the eukaryotic translation initiation factor 3 (eIF-3) complex, which is involved in protein synthesis of a specialized repertoire of mRNAs and, together with other initiation factors, stimulates binding of mRNA and methionyl-tRNAi to the 40S ribosome. The eIF-3 complex specifically targets and initiates translation of a subset of mRNAs involved in cell proliferation. This is Eukaryotic translation initiation factor 3 subunit H from Drosophila grimshawi (Hawaiian fruit fly).